Reading from the N-terminus, the 563-residue chain is Zinc finger CCHC domain-containing protein 7 (563 aa).

Disordered stretches follow at residues serine 41–alanine 64 and serine 133–serine 157. Polar residues predominate over residues serine 133–proline 142. The segment covering glutamine 143 to serine 157 has biased composition (low complexity). 5 consecutive CCHC-type zinc fingers follow at residues valine 265–valine 282, proline 287–serine 304, arginine 305–glutamate 322, lysine 328–glutamate 345, and valine 372–glutamate 389. The disordered stretch occupies residues lysine 443–aspartate 494. Residues proline 449–arginine 463 are compositionally biased toward basic residues. Positions lysine 464–lysine 476 are enriched in basic and acidic residues. Positions glutamine 477–serine 486 are enriched in basic residues.

In terms of assembly, component of a nucleolar TRAMP-like complex, an ATP-dependent exosome regulatory complex consisting of a helicase (MTREX), an oligadenylate polymerase (PAPD5 or PAPD7), and a substrate specific RNA-binding factor (ZCCHC7 or ZCCHC8). Several TRAMP-like complexes exist with specific compositions and are associated with nuclear, or nucleolar RNA exosomes.

It is found in the nucleus. The protein resides in the nucleolus. In Xenopus laevis (African clawed frog), this protein is Zinc finger CCHC domain-containing protein 7 (zcchc7).